A 2078-amino-acid polypeptide reads, in one-letter code: MPWPFSESIKKRACRYLLQRYLGHFLQEKLSLEQLSLDLYQGTGSLAQVPLDKWCLNEILESADAPLEVTEGFIQSISLSVPWGSLLQDNCALEVRGLEMVFRPRPRPATGSEPMYWSSFMTSSMQLAKECLSQKLTDEQGEGSQPFEGLEKFAETIETVLRRVKVTFIDTVLRIEHVPENSKTGTALEIRIERTVYCDETADESSGINVHQPTAFAHKLLQLSGVSLFWDEFSASAKSSPVCSTAPVETEPKLSPSWNPKIIYEPHPQLTRNLPEIAPSDPVQIGRLIGRLELSLTLKQNEVLPGAKLDVDGQIDSIHLLLSPRQVHLLLDMLAAIAGPENSSKIGLANKDRKNRPMQQEDEYRIQMELNRYYLRKDSLSVGVSSEQSFYETETARTPSSREEEVFFSMADMDMSHSLSSLPPLGDPPNMDLELSLTSTYTNTPAGSPLSATVLQPTWGEFLDHHKEQPVRGSTFPSNLVHPTPLQKTSLPSRSVSVDESRPELIFRLAVGTFSISVLHIDPLSPPETSQNLNPLTPMAVAFFTCIEKIDPARFSTEDFKSFRAVFAEACSHDHLRFIGTGIKVSYEQRQRSASRYFSTDMSIGQMEFLECLFPTDFHSVPPHYTELLTFHSKEETGSHSPVCLQLHYKHSENRGPQGNQARLSSVPHKAELQIKLNPVCCELDISIVDRLNSLLQPQKLATVEMMASHMYTSYNKHISLHKAFTEVFLDDSHSPANCRISVQVATPALNLSVRFPIPDLRSDQERGPWFKKSLQKEILYLAFTDLEFKTEFIGGSTPEQIKLELTFRELIGSFQEEKGDPSIKFFHVSSGVDGDTTSSDDFDWPRIVLKINPPAMHSILERIAAEEEEENDGHYQEEEEGGAHSLKDVCDLRRPAPSPFSSRRVMFENEQMVMPGDPVEMTEFQDKAISNSHYVLELTLPNIYVTLPNKSFYEKLYNRIFNDLLLWEPTAPSPVETFENISYGIGLSVASQLINTFNKDSFSAFKSAVHYDEESGSEEETLQYFSTVDPNYRSRRKKKLDSQNKNSQSFLSVLLNINHGLIAVFTDVKQDNGDLLENKHGEFWLEFNSGSLFCVTKYEGFDDKHYICLHSSSFSLYHKGIVNGVILPTETRLPSSTRPHWLEPTIYSSEEDGLSKTSSDGVGGDSLNMLSVAVKILSDKSESNTKEFLIAVGLKGATLQHRMLPSGLSWHEQILYFLNIADEPVLGYNPPTSFTTFHVHLWSCALDYRPLYLPIRSLLTVETFSVSSSVALDKSSSTLRIILDEAALHLSDKCNTVTINLSRDYVRVMDMGLLELTITAVKSDSDGEQTEPRFELHCSSDVVHIRTCSDSCAALMNLIQYIASYGDLQTPNKADMKPGAFQRRSKVDSSGRSSSRGPVLPEADQQMLRDLMSDAMEEIDMQQGTSSVKPQANGVLDEKSQIQEPCCSDLFLFPDESGNVSQESGPTYASFSHHFISDAMTGVPTENDDFCILFAPKAAMQEKEEEPVIKIMVDDAIVIRDNYFSLPVNKTDTSKAPLHFPIPVIRYVVKEVSLVWHLYGGKDFGIVPPTSPAKSYISPHSSPSHTPTRHGRNTVCGGKGRNHDFLMEIQLSKVKFQHEVYPPCKPDCDSSLSEHPVSRQVFIVQDLEIRDRLATSQMNKFLYLYCSKEMPRKAHSNMLTVKALHVCPESGRSPQECCLRVSLMPLRLNIDQDALFFLKDFFTSLSAEVELQMTPDPEVKKSPGADVTCSLPRHLSTSKEPNLVISFSGPKQPSQNDSANSVEVVNGMEEKNFSAEEASFRDQPVFFREFRFTSEVPIRLDYHGKHVSMDQGTLAGILIGLAQLNCSELKLKRLSYRHGLLGVDKLFSYAITEWLNDIKKNQLPGILGGVGPMHSLVQLVQGLKDLVWLPIEQYRKDGRIVRGFQRGAASFGTSTAMAALELTNRMVQTIQAAAETAYDMVSPGTLSIEPKKTKRFPHHRLAHQPVDLREGVAKAYSVVKEGITDTAQTIYETAAREHESRGVTGAVGEVLRQIPPAVVKPLIVATEATSNVLGGMRNQIRPDVRQDESQKWRHGDD.

Residues 13–108 enclose the Chorein N-terminal domain; that stretch reads ACRYLLQRYL…EMVFRPRPRP (96 aa). Residues serine 255 and serine 379 each carry the phosphoserine modification. The segment at 473 to 495 is disordered; that stretch reads GSTFPSNLVHPTPLQKTSLPSRS. Polar residues predominate over residues 486 to 495; sequence LQKTSLPSRS. A phosphoserine mark is found at serine 497, serine 840, serine 886, serine 899, and serine 1008. Residues 868–888 are disordered; that stretch reads EEEENDGHYQEEEEGGAHSLK. Basic and acidic residues predominate over residues 873–888; sequence DGHYQEEEEGGAHSLK. Residue tyrosine 1012 is modified to Phosphotyrosine. 2 positions are modified to phosphoserine: serine 1016 and serine 1018. Threonine 1022 is modified (phosphothreonine). Positions 1375-1405 are disordered; the sequence is ADMKPGAFQRRSKVDSSGRSSSRGPVLPEAD. Residue serine 1526 is modified to Phosphoserine.

Belongs to the ATG2 family. As to quaternary structure, interacts with WDR45/WIPI4.

Its subcellular location is the preautophagosomal structure membrane. It is found in the lipid droplet. It localises to the endoplasmic reticulum membrane. It catalyses the reaction a 1,2-diacyl-sn-glycero-3-phospho-L-serine(in) = a 1,2-diacyl-sn-glycero-3-phospho-L-serine(out). It carries out the reaction a 1,2-diacyl-sn-glycero-3-phosphoethanolamine(in) = a 1,2-diacyl-sn-glycero-3-phosphoethanolamine(out). Lipid transfer protein required for both autophagosome formation and regulation of lipid droplet morphology and dispersion. Tethers the edge of the isolation membrane (IM) to the endoplasmic reticulum (ER) and mediates direct lipid transfer from ER to IM for IM expansion. Binds to the ER exit site (ERES), which is the membrane source for autophagosome formation, and extracts phospholipids from the membrane source and transfers them to ATG9 (ATG9A or ATG9B) to the IM for membrane expansion. Lipid transfer activity is enhanced by WDR45/WIPI4, which promotes ATG2B-association with phosphatidylinositol 3-monophosphate (PI3P)-containing membranes. The protein is Autophagy-related protein 2 homolog B of Homo sapiens (Human).